Here is a 1050-residue protein sequence, read N- to C-terminus: Nuclear pore complex-interacting protein family member B3 (1050 aa).

The helical transmembrane segment at 63–87 (VIIAFPTSYKVVITLWIVYLWVSLL) threads the bilayer. Disordered stretches follow at residues 241–262 (NRMGHQPPPPTQQHSITDNSLS), 290–574 (LTPL…NIKT), and 785–1050 (ERLR…RRLS). The segment covering 252-262 (QQHSITDNSLS) has biased composition (polar residues). The segment covering 349-359 (PLPPSALPSAP) has biased composition (pro residues). Composition is skewed to basic and acidic residues over residues 406–416 (DNIKTPAERLR), 448–458 (DNIKTPAERLR), 490–500 (DNIKTPAERLR), 528–538 (DNIKTPAERLR), 820–830 (DNIKTPAERLR), 862–872 (DNIKTPAERLR), and 904–914 (DNIKTPAERLR).

The protein belongs to the NPIP family.

It localises to the membrane. The chain is Nuclear pore complex-interacting protein family member B3 (NPIPB3) from Homo sapiens (Human).